The following is a 535-amino-acid chain: RAN GTPase-activating protein 1 (535 aa).

Residues 1-115 (MDHSAKTTQN…EESEVEVSKD (115 aa)) are WPP. 9 LRR repeats span residues 208–231 (GSKL…AFAS), 236–259 (QHDL…AVRE), 264–287 (TDKI…AIAE), 320–343 (CSHL…ALAK), 353–376 (EIYM…LLKS), 377–400 (APSL…NLAA), 405–428 (KQSL…LIAK), 433–456 (HDQL…ALAQ), and 461–488 (KNTF…MFKD). The disordered stretch occupies residues 493–535 (LVPLDDNDPEGEDFEDEDEEEEGEDGNELESKLGSLKIKQGEE). Residues 497–520 (DDNDPEGEDFEDEDEEEEGEDGNE) are compositionally biased toward acidic residues.

This sequence belongs to the RNA1 family. Homodimer. Interacts with WIP1 through its WPP domain. Component of Ran complexes at least composed of WIT1 or WIT2, RANGAP1 or RANGAP2, and WIP1 or WIP2 or WIP3. Interacts directly with WIT1, WIP2 and WIP3. Interacts with POK1.

The protein localises to the cytoplasm. Its subcellular location is the nucleus envelope. It is found in the nucleus membrane. The protein resides in the cytoskeleton. It localises to the spindle. The protein localises to the phragmoplast. GTPase activator for the nuclear Ras-related regulatory protein Ran, converting it to the putatively inactive GDP-bound state. Plays a role in spatial signaling during cell division. The chain is RAN GTPase-activating protein 1 (RANGAP1) from Arabidopsis thaliana (Mouse-ear cress).